Reading from the N-terminus, the 346-residue chain is MDDNNSDWTSYDFGNDTIPSPNEISLSHIGTRHWITLVCYGIVFLLGVPGNALVVWVTGFRMPNSVNAQWFLNLAIADLLCCLSLPILMVPLAQDQHWPFGALACKLFSGIFYMMMYCSVLLLVVISLDRFLLVTKPVWCQNNRQPRQARILCFIIWILGLLGSSPYFAHMEIQHHSETKTVCTGSYSSLGHAWAITIIRSFLFFLLPFLIICISHWKVYHMTSSGRRQRDKSSRTLRVILALVLGFFLCWTPLHIVDLLILVSDQPSERFEVNLNLAHVLTLCLAYINSCLNPLLYVCLGRGFKENLISSLRSVLHFASEAPTHGPSMTTNSKSTTDGVFREKPV.

Topologically, residues Met-1–His-33 are extracellular. Asn-4 and Asn-15 each carry an N-linked (GlcNAc...) asparagine glycan. A helical transmembrane segment spans residues Trp-34 to Phe-60. Topologically, residues Arg-61–Ser-65 are cytoplasmic. Residues Val-66–Met-89 form a helical membrane-spanning segment. Topologically, residues Val-90–Lys-106 are extracellular. The cysteines at positions 105 and 183 are disulfide-linked. Residues Leu-107–Leu-128 traverse the membrane as a helical segment. Residues Asp-129 to Ala-149 lie on the Cytoplasmic side of the membrane. The chain crosses the membrane as a helical span at residues Arg-150 to His-170. Residues Met-171–Trp-194 are Extracellular-facing. A helical membrane pass occupies residues Ala-195 to Tyr-220. Topologically, residues His-221–Arg-238 are cytoplasmic. A helical membrane pass occupies residues Val-239–Ile-261. At Leu-262–His-279 the chain is on the extracellular side. A helical transmembrane segment spans residues Val-280–Leu-300. Over Gly-301–Val-346 the chain is Cytoplasmic. The tract at residues Pro-323–Val-346 is disordered. A compositionally biased stretch (polar residues) spans Pro-327 to Asp-338.

This sequence belongs to the G-protein coupled receptor 1 family.

It localises to the cell membrane. Functionally, receptor for the chemotactic and inflammatory peptide anaphylatoxin C5a. This receptor stimulates chemotaxis, granule enzyme release and superoxide anion production. The sequence is that of C5a anaphylatoxin chemotactic receptor 1 (c5ar1) from Danio rerio (Zebrafish).